The chain runs to 513 residues: ATP synthase subunit alpha (513 aa).

169-176 (GDRQTGKT) contacts ATP.

Belongs to the ATPase alpha/beta chains family. In terms of assembly, F-type ATPases have 2 components, CF(1) - the catalytic core - and CF(0) - the membrane proton channel. CF(1) has five subunits: alpha(3), beta(3), gamma(1), delta(1), epsilon(1). CF(0) has three main subunits: a(1), b(2) and c(9-12). The alpha and beta chains form an alternating ring which encloses part of the gamma chain. CF(1) is attached to CF(0) by a central stalk formed by the gamma and epsilon chains, while a peripheral stalk is formed by the delta and b chains.

Its subcellular location is the cell inner membrane. The enzyme catalyses ATP + H2O + 4 H(+)(in) = ADP + phosphate + 5 H(+)(out). Functionally, produces ATP from ADP in the presence of a proton gradient across the membrane. The alpha chain is a regulatory subunit. The polypeptide is ATP synthase subunit alpha (Klebsiella pneumoniae subsp. pneumoniae (strain ATCC 700721 / MGH 78578)).